Reading from the N-terminus, the 210-residue chain is Neuroendocrine protein 7B2 (210 aa).

The first 24 residues, 1–24, serve as a signal peptide directing secretion; the sequence is MTSRMAILSGLLFWLLLEWNPAFA. C118 and C128 form a disulfide bridge. S139 and S203 each carry phosphoserine.

This sequence belongs to the 7B2 family. In terms of assembly, interacts with PCSK2/PC2 early in the secretory pathway. Dissociation occurs at later stages. Post-translationally, proteolytically cleaved in the Golgi by a furin-like convertase to generate bioactive peptides. In terms of processing, sulfated on tyrosine residues.

The protein localises to the secreted. In terms of biological role, acts as a molecular chaperone for PCSK2/PC2, preventing its premature activation in the regulated secretory pathway. Binds to inactive PCSK2 in the endoplasmic reticulum and facilitates its transport from there to later compartments of the secretory pathway where it is proteolytically matured and activated. Also required for cleavage of PCSK2 but does not appear to be involved in its folding. Plays a role in regulating pituitary hormone secretion. The C-terminal peptide inhibits PCSK2 in vitro. This Rattus norvegicus (Rat) protein is Neuroendocrine protein 7B2 (Scg5).